The following is a 148-amino-acid chain: Azurin (148 aa).

The first 18 residues, 1-18 (MRNQLLFALAFIPTIAAA), serve as a signal peptide directing secretion. Residues 19-148 (ASNCEVNVSA…MMRGTVKLVD (130 aa)) form the Plastocyanin-like domain. Cysteines 22 and 45 form a disulfide. Cu cation-binding residues include H65, C131, H136, and M140.

Its subcellular location is the periplasm. It participates in one-carbon metabolism; methylamine degradation. In terms of biological role, probable electron acceptor for methylamine dehydrogenase. The chain is Azurin (azu) from Methylobacillus flagellatus (strain ATCC 51484 / DSM 6875 / VKM B-1610 / KT).